We begin with the raw amino-acid sequence, 259 residues long: Phosphate import ATP-binding protein PstB 1 (259 aa).

Residues 7–254 (VKPEDVYQIN…PDDHRTKDYI (248 aa)) enclose the ABC transporter domain. An ATP-binding site is contributed by 45-52 (GPSGCGKS).

It belongs to the ABC transporter superfamily. Phosphate importer (TC 3.A.1.7) family. As to quaternary structure, the complex is composed of two ATP-binding proteins (PstB), two transmembrane proteins (PstC and PstA) and a solute-binding protein (PstS).

The protein localises to the cell membrane. It catalyses the reaction phosphate(out) + ATP + H2O = ADP + 2 phosphate(in) + H(+). Its function is as follows. Part of the ABC transporter complex PstSACB involved in phosphate import. Responsible for energy coupling to the transport system. The chain is Phosphate import ATP-binding protein PstB 1 from Bacillus licheniformis (strain ATCC 14580 / DSM 13 / JCM 2505 / CCUG 7422 / NBRC 12200 / NCIMB 9375 / NCTC 10341 / NRRL NRS-1264 / Gibson 46).